Reading from the N-terminus, the 298-residue chain is Ankyrin repeat domain-containing protein 29 (298 aa).

8 ANK repeats span residues 8 to 38 (PLAN…DVDC), 42 to 71 (YGTT…DINL), 75 to 104 (TGST…STEF), 108 to 137 (DGGT…NVHD), 141 to 170 (DGAT…KVNQ), 174 to 203 (DGTA…DRDA), 207 to 236 (DGST…SLGI), and 239 to 268 (NGST…DPAL).

The chain is Ankyrin repeat domain-containing protein 29 (ankrd29) from Danio rerio (Zebrafish).